Here is a 517-residue protein sequence, read N- to C-terminus: MTKKSFFSLGRLLLAVPAGAIATLTFAPYNYWLLAPVSIALLLWLLQAQTVKRSGLIGFLWGLGLFGTGISWVHVSIDTFGGMPKIASVFLMSSLISYLALYPAAFGALFNRFNRGRPFHQLMLSGPVIWLLLDWVRGWALTGFPWLWMGYGQIDSPLASLAPILGVEGITLALVLISGALVASVVYRNWKPLMVPVLIMALTWAANTVSWVVPDPTKNLDVALIQGNVPQELKWLPSERWPTLMKYTDLTRENWDADIIVWPEAAIPALEAHLPTFLQNLDSAARNNNSTVITGVLDQKEDGQYFNNILTLGKNAYGPYQYDKATRYSKHHLLPFGEFVPFGDLLRPIAPLFNLPMSSFSRGDLVQPNLEASGYSIAPALCYEVAFSEQVRKNVNIDTDLLLTLSNDAWFGTSIGPFQHMEIAQMRALELGKPLIRSTNTGITAVVDHTGQIIKQIPQFETAVLRATITPTEGLTPYTTLGSWPLYFYSLWSLTLSMILIRRRSGRFRDTRPVETE.

Helical transmembrane passes span 5–25, 26–46, 55–75, 90–110, 128–148, 162–182, and 193–213; these read SFFS…ATLT, FAPY…LWLL, GLIG…WVHV, FLMS…GALF, VIWL…PWLW, APIL…GALV, and LMVP…SWVV. Positions 225–471 constitute a CN hydrolase domain; the sequence is IQGNVPQELK…TAVLRATITP (247 aa). Glu264 acts as the Proton acceptor in catalysis. Residue Lys330 is part of the active site. Cys382 acts as the Nucleophile in catalysis.

This sequence belongs to the CN hydrolase family. Apolipoprotein N-acyltransferase subfamily.

Its subcellular location is the cell inner membrane. It catalyses the reaction N-terminal S-1,2-diacyl-sn-glyceryl-L-cysteinyl-[lipoprotein] + a glycerophospholipid = N-acyl-S-1,2-diacyl-sn-glyceryl-L-cysteinyl-[lipoprotein] + a 2-acyl-sn-glycero-3-phospholipid + H(+). It participates in protein modification; lipoprotein biosynthesis (N-acyl transfer). Functionally, catalyzes the phospholipid dependent N-acylation of the N-terminal cysteine of apolipoprotein, the last step in lipoprotein maturation. The polypeptide is Apolipoprotein N-acyltransferase (Photobacterium profundum (strain SS9)).